We begin with the raw amino-acid sequence, 350 residues long: Phenylalanine--tRNA ligase alpha subunit (350 aa).

Glu-271 provides a ligand contact to Mg(2+).

Belongs to the class-II aminoacyl-tRNA synthetase family. Phe-tRNA synthetase alpha subunit type 1 subfamily. In terms of assembly, tetramer of two alpha and two beta subunits. It depends on Mg(2+) as a cofactor.

It localises to the cytoplasm. The enzyme catalyses tRNA(Phe) + L-phenylalanine + ATP = L-phenylalanyl-tRNA(Phe) + AMP + diphosphate + H(+). This Delftia acidovorans (strain DSM 14801 / SPH-1) protein is Phenylalanine--tRNA ligase alpha subunit.